Consider the following 167-residue polypeptide: MLKSSNINSVLNELPNDPARDSTAQSSHNGKPKQDAETCCSSQDNEVMASLAALQLSAGVLQIAEPPLNHVRTQLRELIGRQNKTYIDLSKEKYKLDCSEVARLNDMMSDVKRYKDKLTKIKKEMQGVYQRTKELKKRAANVAACKQRDYQRKLERLQHEESLIGSQ.

The span at 1-11 (MLKSSNINSVL) shows a compositional bias: polar residues. The tract at residues 1 to 38 (MLKSSNINSVLNELPNDPARDSTAQSSHNGKPKQDAET) is disordered. The stretch at 102 to 160 (ARLNDMMSDVKRYKDKLTKIKKEMQGVYQRTKELKKRAANVAACKQRDYQRKLERLQHE) forms a coiled coil.

It belongs to the BLOC1S6 family. Component of the biogenesis of lysosome-related organelles complex-1 (BLOC-1) composed of Blos1, Blos2, Blos3, Blos4, Dysb, Muted, Pldn and Snapin. Interacts with Blos1, Blos4 and Dysb.

It localises to the synapse. Its subcellular location is the cytoplasm. The protein localises to the cytoskeleton. It is found in the myofibril. The protein resides in the sarcomere. It localises to the z line. In terms of biological role, component of the biogenesis of lysosome-related organelles complex-1 (BLOC-1) involved in pigment granule biogenesis and membrane trafficking in synapses. In response to high synaptic activity at neuromuscular junctions, plays a key role in promoting efficient synaptic vesicle recycling and re-formation through early endosomes. In Drosophila melanogaster (Fruit fly), this protein is Biogenesis of lysosome-related organelles complex 1 subunit 6.